Consider the following 431-residue polypeptide: MFIAVVGLSHRTAPVEIRERLSIPEAEVGERIQQLRAHPHIEEAAILSTCNRLEVYIVTPEMESGVRQTMQFLAEAKGIPLPQLRPHLFTLLYQDAVTHLMRVAAGLDSLVLGEGQILSQVKKAQQLGQACNGMDRILNRLFKAAITAGKRIRTETGIGTGAMSISSAAVELALQEQGSLSQGKVTVVGAGKMARLLVQHLLAKGAVDITVVNRSLERAEALAKQFEQPIQVLPWESLLSSIAESNLVFTSTGATQPILTYEQLAGVLQPDQPLLLVDISVPRNIDPGVEKLRGVQVFNVDHLSRIVEENRAQRQKLALAAEALVEEEVEQFMEWWRSLETVPTISSLRHKVESIREQEMEKALSRLGKDFAEKHLEVIEALTRGIVNKILHDPMVQLRAQRDIEARRRAMQILQELFNLDPMPFQAQQER.

Substrate contacts are provided by residues 49–52, Ser109, 114–116, and Gln120; these read TCNR and EGQ. Catalysis depends on Cys50, which acts as the Nucleophile. Residue 189–194 participates in NADP(+) binding; sequence GAGKMA.

The protein belongs to the glutamyl-tRNA reductase family. As to quaternary structure, homodimer.

The enzyme catalyses (S)-4-amino-5-oxopentanoate + tRNA(Glu) + NADP(+) = L-glutamyl-tRNA(Glu) + NADPH + H(+). It functions in the pathway porphyrin-containing compound metabolism; protoporphyrin-IX biosynthesis; 5-aminolevulinate from L-glutamyl-tRNA(Glu): step 1/2. The protein operates within porphyrin-containing compound metabolism; chlorophyll biosynthesis. Catalyzes the NADPH-dependent reduction of glutamyl-tRNA(Glu) to glutamate 1-semialdehyde (GSA). In Synechococcus sp. (strain JA-3-3Ab) (Cyanobacteria bacterium Yellowstone A-Prime), this protein is Glutamyl-tRNA reductase.